The chain runs to 680 residues: DNA ligase (680 aa).

Residues 35 to 39, 84 to 85, and glutamate 115 contribute to the NAD(+) site; these read DAQYD and SL. Residue lysine 117 is the N6-AMP-lysine intermediate of the active site. Residues arginine 138, glutamate 174, lysine 291, and lysine 315 each contribute to the NAD(+) site. Zn(2+) is bound by residues cysteine 419, cysteine 422, cysteine 437, and cysteine 442. Residues 601-680 enclose the BRCT domain; sequence NKNMPFSGME…REFINMLEQS (80 aa).

This sequence belongs to the NAD-dependent DNA ligase family. LigA subfamily. Mg(2+) is required as a cofactor. It depends on Mn(2+) as a cofactor.

The enzyme catalyses NAD(+) + (deoxyribonucleotide)n-3'-hydroxyl + 5'-phospho-(deoxyribonucleotide)m = (deoxyribonucleotide)n+m + AMP + beta-nicotinamide D-nucleotide.. In terms of biological role, DNA ligase that catalyzes the formation of phosphodiester linkages between 5'-phosphoryl and 3'-hydroxyl groups in double-stranded DNA using NAD as a coenzyme and as the energy source for the reaction. It is essential for DNA replication and repair of damaged DNA. This chain is DNA ligase, found in Dehalococcoides mccartyi (strain ATCC BAA-2100 / JCM 16839 / KCTC 5957 / BAV1).